A 177-amino-acid polypeptide reads, in one-letter code: Flavodoxin (177 aa).

A Flavodoxin-like domain is found at 4-173 (IGIFFGSDTG…RIDSWLEKLK (170 aa)).

The protein belongs to the flavodoxin family. FMN serves as cofactor.

In terms of biological role, low-potential electron donor to a number of redox enzymes. NifF is the electron donor to nitrogenase. The chain is Flavodoxin (nifF) from Enterobacter agglomerans (Erwinia herbicola).